The chain runs to 165 residues: Phosphopantetheine adenylyltransferase (165 aa).

S11 serves as a coordination point for substrate. ATP contacts are provided by residues 11 to 12 and H19; that span reads SF. Positions 43, 76, and 90 each coordinate substrate. ATP is bound by residues 91–93, E101, and 126–132; these read GIR and FSFISSS.

Belongs to the bacterial CoaD family. As to quaternary structure, homohexamer. It depends on Mg(2+) as a cofactor.

It is found in the cytoplasm. It carries out the reaction (R)-4'-phosphopantetheine + ATP + H(+) = 3'-dephospho-CoA + diphosphate. The protein operates within cofactor biosynthesis; coenzyme A biosynthesis; CoA from (R)-pantothenate: step 4/5. Its function is as follows. Reversibly transfers an adenylyl group from ATP to 4'-phosphopantetheine, yielding dephospho-CoA (dPCoA) and pyrophosphate. The chain is Phosphopantetheine adenylyltransferase from Latilactobacillus sakei subsp. sakei (strain 23K) (Lactobacillus sakei subsp. sakei).